The primary structure comprises 430 residues: DNA-binding protein cre-1 (430 aa).

Residues Met1–Ser19 show a composition bias toward polar residues. 4 disordered regions span residues Met1–Pro77, Ile97–Tyr187, Ser265–Ser340, and Leu357–Leu430. A compositionally biased stretch (low complexity) spans Pro30–Pro46. 2 C2H2-type zinc fingers span residues Tyr78 to His100 and His106 to His130. Residues Ile97–His106 are compositionally biased toward basic and acidic residues. Polar residues-rich tracts occupy residues His130–His147 and Ala175–Tyr187. Basic and acidic residues predominate over residues His268–Tyr277. Positions Pro289–Ser303 are enriched in low complexity. Over residues Ser412 to Ser422 the composition is skewed to polar residues.

This sequence belongs to the creA/MIG C2H2-type zinc-finger protein family.

It is found in the nucleus. Its function is as follows. Involved in carbon catabolite repression. Represses the transcription of a number of genes by binding to a GC-rich region in their promoter. This chain is DNA-binding protein cre-1 (cre-1), found in Neurospora crassa (strain ATCC 24698 / 74-OR23-1A / CBS 708.71 / DSM 1257 / FGSC 987).